The primary structure comprises 422 residues: Ena/VASP-like protein (422 aa).

The WH1 domain occupies 4–118; sequence FEEFSEQSIC…NAMLFALNIM (115 aa). A compositionally biased stretch (polar residues) spans 120–135; the sequence is SQEGGPSSQRQVQNGP. Disordered regions lie at residues 120 to 139 and 147 to 375; these read SQEG…SPDE and VMEQ…PAGS. Ser-136 carries the post-translational modification Phosphoserine. Residues 147-163 show a composition bias toward basic and acidic residues; sequence VMEQHQQQRQESLERRT. A compositionally biased stretch (low complexity) spans 175–186; it reads PSSAASAPVSCS. Pro residues predominate over residues 187-212; it reads GPPPPPPPPVPPPPTGATPPPPPPLP. The interval 228–248 is EVH2 block A; that stretch reads GLAAAIAGAKLRRVQRPEDAS. The tract at residues 228-419 is EVH2; the sequence is GLAAAIAGAK…DAIRQELSGI (192 aa). The KLKR signature appears at 237 to 240; sequence KLRR. The segment covering 248 to 259 has biased composition (low complexity); that stretch reads SGGSSPSGTSKS. Phosphoserine occurs at positions 252 and 265. Residues 271–288 are EVH2 block B; that stretch reads GGLMEEMNKLLAKRRKAA. Polar residues predominate over residues 305-326; that stretch reads EDPSTSPSPGTRAASQPPNSSE. Phosphoserine is present on residues Ser-310, Ser-312, Ser-335, Ser-337, Ser-347, Ser-355, Ser-360, and Ser-375. A compositionally biased stretch (basic and acidic residues) spans 327-337; that stretch reads AGRKPWERSNS. Residues 348 to 368 are required for interaction with ZDHHC17; sequence RTPSVAKSPEAKSPLQSQPHS. The interval 385–419 is EVH2 block C; that stretch reads DLDRMKQEILEEVVRELHKVKDEIIDAIRQELSGI. The stretch at 388–414 forms a coiled coil; the sequence is RMKQEILEEVVRELHKVKDEIIDAIRQ.

This sequence belongs to the Ena/VASP family. As to quaternary structure, homotetramer. Binds to the SH3 domains of ABL1, LYN and SRC. Also binds to profilin, with preference for isoform IIa of PFN2, and the WW domain of APBB1/FE65. Binds to SEMA6A. Interacts, via the Pro-rich region, with the C-terminal SH3 domain of DNMBP. Interacts with RAPH1. Binds, via the EVH1 domain, the Pro-rich domain of Listeria monocytogenes actA. Binds, via the EVH1 domain, the Pro-rich domain of ZYX. Interacts with FYB1. Interacts with ZDHHC17. Post-translationally, phosphorylated by PKA; phosphorylation abolishes binding to SH3 domains of ABL and SRC.

It localises to the cytoplasm. The protein resides in the cytoskeleton. It is found in the stress fiber. Its subcellular location is the cell projection. The protein localises to the lamellipodium. Its function is as follows. Ena/VASP proteins are actin-associated proteins involved in a range of processes dependent on cytoskeleton remodeling and cell polarity such as axon guidance and lamellipodial and filopodial dynamics in migrating cells. EVL enhances actin nucleation and polymerization. This is Ena/VASP-like protein (EVL) from Pongo abelii (Sumatran orangutan).